Reading from the N-terminus, the 153-residue chain is Large ribosomal subunit protein bL9 (153 aa).

The protein belongs to the bacterial ribosomal protein bL9 family.

In terms of biological role, binds to the 23S rRNA. The protein is Large ribosomal subunit protein bL9 of Blochmanniella pennsylvanica (strain BPEN).